A 101-amino-acid polypeptide reads, in one-letter code: Putative septation protein SpoVG (101 aa).

The disordered stretch occupies residues Glu82 to Asp101.

Belongs to the SpoVG family.

Functionally, could be involved in septation. The polypeptide is Putative septation protein SpoVG (Anaeromyxobacter dehalogenans (strain 2CP-1 / ATCC BAA-258)).